Reading from the N-terminus, the 124-residue chain is MTTILAIAVFGAVGCVARYLLAGGVYALAGRAFPWGTLAVNVIGAFLIGLIMEAALRTTLMSQELRLGLTIGFLGGFTTFSTFSYETFKLLEDGEFFSASLNVLASVALCLVGTWAGIMAARQL.

The next 4 helical transmembrane spans lie at 4–24 (ILAI…LAGG), 32–52 (AFPW…GLIM), 68–88 (GLTI…YETF), and 101–121 (LNVL…IMAA). Positions 75 and 78 each coordinate Na(+).

The protein belongs to the fluoride channel Fluc/FEX (TC 1.A.43) family.

It is found in the cell inner membrane. It carries out the reaction fluoride(in) = fluoride(out). Its activity is regulated as follows. Na(+) is not transported, but it plays an essential structural role and its presence is essential for fluoride channel function. Functionally, fluoride-specific ion channel. Important for reducing fluoride concentration in the cell, thus reducing its toxicity. In Geobacter sulfurreducens (strain ATCC 51573 / DSM 12127 / PCA), this protein is Fluoride-specific ion channel FluC.